Consider the following 249-residue polypeptide: tRNA pseudouridine synthase A (249 aa).

D52 (nucleophile) is an active-site residue. Residue Y110 participates in substrate binding.

Belongs to the tRNA pseudouridine synthase TruA family. As to quaternary structure, homodimer.

The enzyme catalyses uridine(38/39/40) in tRNA = pseudouridine(38/39/40) in tRNA. Its function is as follows. Formation of pseudouridine at positions 38, 39 and 40 in the anticodon stem and loop of transfer RNAs. This Azobacteroides pseudotrichonymphae genomovar. CFP2 protein is tRNA pseudouridine synthase A.